Consider the following 102-residue polypeptide: Flagellar hook-basal body complex protein FliE 1 (102 aa).

The protein belongs to the FliE family.

Its subcellular location is the bacterial flagellum basal body. In Bradyrhizobium diazoefficiens (strain JCM 10833 / BCRC 13528 / IAM 13628 / NBRC 14792 / USDA 110), this protein is Flagellar hook-basal body complex protein FliE 1 (fliE1).